A 468-amino-acid polypeptide reads, in one-letter code: Chromosomal replication initiator protein DnaA (468 aa).

Residues 1–84 (MSSSLWLQCL…RFEVGSKPIS (84 aa)) form a domain I, interacts with DnaA modulators region. The tract at residues 84–131 (SAPPRPQRTAADVAAATSAPAQMQARQSLHKPWESRGPEPVDDLNHRS) is domain II. Residues 112–132 (LHKPWESRGPEPVDDLNHRSN) are disordered. Over residues 114-129 (KPWESRGPEPVDDLNH) the composition is skewed to basic and acidic residues. The segment at 132-348 (NVNPKHKFTN…GALNRVVANA (217 aa)) is domain III, AAA+ region. The ATP site is built by G176, G178, K179, and T180. Positions 349–468 (NFTGRAITID…YSNLIRTLSS (120 aa)) are domain IV, binds dsDNA.

Belongs to the DnaA family. Oligomerizes as a right-handed, spiral filament on DNA at oriC.

It is found in the cytoplasm. Plays an essential role in the initiation and regulation of chromosomal replication. ATP-DnaA binds to the origin of replication (oriC) to initiate formation of the DNA replication initiation complex once per cell cycle. Binds the DnaA box (a 9 base pair repeat at the origin) and separates the double-stranded (ds)DNA. Forms a right-handed helical filament on oriC DNA; dsDNA binds to the exterior of the filament while single-stranded (ss)DNA is stabiized in the filament's interior. The ATP-DnaA-oriC complex binds and stabilizes one strand of the AT-rich DNA unwinding element (DUE), permitting loading of DNA polymerase. After initiation quickly degrades to an ADP-DnaA complex that is not apt for DNA replication. Binds acidic phospholipids. The protein is Chromosomal replication initiator protein DnaA of Aliivibrio salmonicida (strain LFI1238) (Vibrio salmonicida (strain LFI1238)).